The sequence spans 264 residues: Carbonic anhydrase (264 aa).

The segment at residues 1 to 33 (MSSTLYRRQLLKLLGMSVLGTSFSSCVTSPARA) is a signal peptide (tat-type signal). An Alpha-carbonic anhydrase domain is found at 36 to 264 (VNWGYIGKVG…LNDRLVIEAI (229 aa)). The Zn(2+) site is built by His127, His129, and His146. Residue 214-215 (TT) coordinates substrate.

This sequence belongs to the alpha-carbonic anhydrase family. The cofactor is Zn(2+). In terms of processing, predicted to be exported by the Tat system. The position of the signal peptide cleavage has not been experimentally proven.

It carries out the reaction hydrogencarbonate + H(+) = CO2 + H2O. Functionally, reversible hydration of carbon dioxide. This Nostoc sp. (strain PCC 7120 / SAG 25.82 / UTEX 2576) protein is Carbonic anhydrase (ecaA).